The chain runs to 255 residues: NAD kinase (255 aa).

Residue Asp-44 is the Proton acceptor of the active site. NAD(+)-binding positions include 44–45 (DG), His-49, 114–115 (NE), Asp-144, Ala-152, 155–160 (SAYNLS), and Gln-216.

The protein belongs to the NAD kinase family. A divalent metal cation serves as cofactor.

The protein localises to the cytoplasm. The catalysed reaction is NAD(+) + ATP = ADP + NADP(+) + H(+). In terms of biological role, involved in the regulation of the intracellular balance of NAD and NADP, and is a key enzyme in the biosynthesis of NADP. Catalyzes specifically the phosphorylation on 2'-hydroxyl of the adenosine moiety of NAD to yield NADP. The sequence is that of NAD kinase from Rickettsia prowazekii (strain Madrid E).